A 312-amino-acid polypeptide reads, in one-letter code: MASGNCTTPTTFILSGLTDNPGLQMPLFMVFLAIYTITLLTNLGLIALISVDLHLQTPMYIFLQNLSFTDAAYSTVITPKMLATFLEERKTISYIGCILQYFSFVLLTVTESLLLAVMAYDRYVAICKPLLYPSIMTKAVCWRLVKGLYSLAFLNSLVHTSGLLKLSFCSSNVVNHFFCDNSPLFQISSSSTTLNELLVFIFGSLFAMSSIITILISYVFIILTVVRIRSKDGKYKAFSTCTSHLMAVSLFHGTVIFMYLRPVKLFSLDTDKIASLFYTVVIPMLNPLIYSWRNKEVKDALRRVIATNVWIH.

Residues 1-26 (MASGNCTTPTTFILSGLTDNPGLQMP) lie on the Extracellular side of the membrane. N-linked (GlcNAc...) asparagine glycosylation is present at Asn5. A helical membrane pass occupies residues 27-49 (LFMVFLAIYTITLLTNLGLIALI). The Cytoplasmic segment spans residues 50–57 (SVDLHLQT). A helical transmembrane segment spans residues 58-79 (PMYIFLQNLSFTDAAYSTVITP). The Extracellular segment spans residues 80-100 (KMLATFLEERKTISYIGCILQ). A disulfide bridge links Cys97 with Cys179. Residues 101–120 (YFSFVLLTVTESLLLAVMAY) form a helical membrane-spanning segment. Over 121–139 (DRYVAICKPLLYPSIMTKA) the chain is Cytoplasmic. The chain crosses the membrane as a helical span at residues 140–164 (VCWRLVKGLYSLAFLNSLVHTSGLL). Residues 165–205 (KLSFCSSNVVNHFFCDNSPLFQISSSSTTLNELLVFIFGSL) lie on the Extracellular side of the membrane. The chain crosses the membrane as a helical span at residues 206-226 (FAMSSIITILISYVFIILTVV). Residues 227–239 (RIRSKDGKYKAFS) are Cytoplasmic-facing. The chain crosses the membrane as a helical span at residues 240 to 260 (TCTSHLMAVSLFHGTVIFMYL). The Extracellular segment spans residues 261-271 (RPVKLFSLDTD). Residues 272 to 292 (KIASLFYTVVIPMLNPLIYSW) form a helical membrane-spanning segment. The Cytoplasmic segment spans residues 293–312 (RNKEVKDALRRVIATNVWIH).

It belongs to the G-protein coupled receptor 1 family.

The protein localises to the cell membrane. Odorant receptor. The chain is Olfactory receptor-like protein COR4 (COR4) from Gallus gallus (Chicken).